The primary structure comprises 618 residues: ELMO domain-containing protein C (618 aa).

A coiled-coil region spans residues 1 to 72 (MERYRIRRER…EELRLQGDRF (72 aa)). Disordered regions lie at residues 153–175 (NFDN…KPSL) and 245–276 (TTTT…STTV). 2 stretches are compositionally biased toward low complexity: residues 156-171 (NNNN…NNGN) and 245-275 (TTTT…SSTT). The ELMO domain maps to 382-545 (DHEEYLKHLW…KLKSQLNEIS (164 aa)). Composition is skewed to low complexity over residues 574–592 (QQQQ…PSSP) and 602–618 (TTTS…TQNN). A disordered region spans residues 574–618 (QQQQQLQQQQQSLPLPSSPRSFLNNYQQTTTSSTSISPSKNTQNN).

The chain is ELMO domain-containing protein C (elmoC) from Dictyostelium discoideum (Social amoeba).